The sequence spans 388 residues: L-lactate dehydrogenase (388 aa).

The FMN hydroxy acid dehydrogenase domain maps to 1–380 (MIISAASDYR…SADALSRVTR (380 aa)). Substrate is bound at residue Tyr24. Positions 106 and 127 each coordinate FMN. Residue Tyr129 participates in substrate binding. Thr155 is a binding site for FMN. Arg164 provides a ligand contact to substrate. Lys251 contacts FMN. The active-site Proton acceptor is the His275. Arg278 lines the substrate pocket. Residue 306–330 (DSGIRSGLDVVRMLALGADAVLLGR) participates in FMN binding.

The protein belongs to the FMN-dependent alpha-hydroxy acid dehydrogenase family. It depends on FMN as a cofactor.

It localises to the cell inner membrane. It catalyses the reaction (S)-lactate + A = pyruvate + AH2. Its function is as follows. Catalyzes the conversion of L-lactate to pyruvate. Is coupled to the respiratory chain. This is L-lactate dehydrogenase from Xanthomonas euvesicatoria pv. vesicatoria (strain 85-10) (Xanthomonas campestris pv. vesicatoria).